The chain runs to 178 residues: Peptide deformylase (178 aa).

2 residues coordinate Fe cation: Cys-102 and His-144. Glu-145 is a catalytic residue. Residue His-148 participates in Fe cation binding.

The protein belongs to the polypeptide deformylase family. Fe(2+) serves as cofactor.

The enzyme catalyses N-terminal N-formyl-L-methionyl-[peptide] + H2O = N-terminal L-methionyl-[peptide] + formate. Functionally, removes the formyl group from the N-terminal Met of newly synthesized proteins. Requires at least a dipeptide for an efficient rate of reaction. N-terminal L-methionine is a prerequisite for activity but the enzyme has broad specificity at other positions. This Leptospira interrogans serogroup Icterohaemorrhagiae serovar copenhageni (strain Fiocruz L1-130) protein is Peptide deformylase.